Reading from the N-terminus, the 177-residue chain is Alpha-crystallin B chain (177 aa).

An N-acetylmethionine modification is found at Met-1. Positions Arg-58 to Asp-166 constitute a sHSP domain. 5 residues coordinate Zn(2+): His-85, His-106, Glu-108, His-113, and His-121. Basic and acidic residues predominate over residues Asp-155–Pro-169. Positions Asp-155–Lys-177 are disordered.

Belongs to the small heat shock protein (HSP20) family. In terms of assembly, heteromer composed of three CRYAA and one CRYAB subunits. Aggregates with homologous proteins, including the small heat shock protein HSPB1, to form large heteromeric complexes. Inter-subunit bridging via zinc ions enhances stability, which is crucial as there is no protein turn over in the lens. Interacts with HSPBAP1 and TTN/titin.

May contribute to the transparency and refractive index of the lens. The protein is Alpha-crystallin B chain (CRYAB) of Squalus acanthias (Spiny dogfish).